Consider the following 302-residue polypeptide: GTPase Era (302 aa).

One can recognise an Era-type G domain in the interval 10-178 (RCGYVAIVGR…EAQIAKHLPE (169 aa)). Residues 18–25 (GRPNVGKS) form a G1 region. A GTP-binding site is contributed by 18–25 (GRPNVGKS). A G2 region spans residues 44 to 48 (QTTRH). Positions 65-68 (DTPG) are G3. Residues 65–69 (DTPGM) and 127–130 (NKTD) each bind GTP. Residues 127–130 (NKTD) are G4. The segment at 157-159 (ISA) is G5. Residues 201–285 (VREKIMRQLG…MLNLWVKVKG (85 aa)) enclose the KH type-2 domain.

It belongs to the TRAFAC class TrmE-Era-EngA-EngB-Septin-like GTPase superfamily. Era GTPase family. Monomer.

The protein resides in the cytoplasm. It is found in the cell inner membrane. In terms of biological role, an essential GTPase that binds both GDP and GTP, with rapid nucleotide exchange. Plays a role in 16S rRNA processing and 30S ribosomal subunit biogenesis and possibly also in cell cycle regulation and energy metabolism. The sequence is that of GTPase Era from Pseudomonas putida (strain ATCC 47054 / DSM 6125 / CFBP 8728 / NCIMB 11950 / KT2440).